A 474-amino-acid chain; its full sequence is ATP synthase subunit beta (474 aa).

Residue 151–158 (GGAGVGKT) participates in ATP binding.

It belongs to the ATPase alpha/beta chains family. In terms of assembly, F-type ATPases have 2 components, CF(1) - the catalytic core - and CF(0) - the membrane proton channel. CF(1) has five subunits: alpha(3), beta(3), gamma(1), delta(1), epsilon(1). CF(0) has four main subunits: a(1), b(1), b'(1) and c(9-12).

The protein resides in the cell inner membrane. The catalysed reaction is ATP + H2O + 4 H(+)(in) = ADP + phosphate + 5 H(+)(out). Functionally, produces ATP from ADP in the presence of a proton gradient across the membrane. The catalytic sites are hosted primarily by the beta subunits. The chain is ATP synthase subunit beta from Roseobacter denitrificans (strain ATCC 33942 / OCh 114) (Erythrobacter sp. (strain OCh 114)).